A 179-amino-acid polypeptide reads, in one-letter code: Coatomer subunit zeta-2 (179 aa).

The protein belongs to the adaptor complexes small subunit family. In terms of assembly, oligomeric complex that consists of at least the alpha, beta, beta', gamma, delta, epsilon and zeta subunits.

Its subcellular location is the cytoplasm. It is found in the golgi apparatus membrane. The protein resides in the cytoplasmic vesicle. The protein localises to the COPI-coated vesicle membrane. Functionally, the coatomer is a cytosolic protein complex that binds to dilysine motifs and reversibly associates with Golgi non-clathrin-coated vesicles, which further mediate biosynthetic protein transport from the ER, via the Golgi up to the trans Golgi network. Coatomer complex is required for budding from Golgi membranes, and is essential for the retrograde Golgi-to-ER transport of dilysine-tagged proteins. The zeta subunit may be involved in regulating the coat assembly and, hence, the rate of biosynthetic protein transport due to its association-dissociation properties with the coatomer complex. This chain is Coatomer subunit zeta-2, found in Arabidopsis thaliana (Mouse-ear cress).